A 288-amino-acid polypeptide reads, in one-letter code: GETISIYYDPGKFPALMPLKNGNYEERNGGVPQRGNITIHLQQFNEDLDKMTPDKNFGGIGVIDFERWKPIFRQNWGNTEIHKKYSIELVRYEHPKWSESMIEAEATKKFEKYARLFMEETLKLAKKTRKRAKWGYYGFPYCYNYTPNNPGPDCDAKAMIENDRLSWMYNNQEILFPSVYVRHELTPDQRVYLVQGRIKEAVRISNNLKHSPKVLSYWWYVYQDKMDIFLSETDVKKTFQEIVTNGGDGIIIWGSSSDVNSLSKCKRLREYLLNTLGPFAVNVTETVN.

Asn36 carries N-linked (GlcNAc...) asparagine glycosylation. Glu66 functions as the Proton donor in the catalytic mechanism. Cys142 and Cys154 are disulfide-bonded. N-linked (GlcNAc...) asparagine glycosylation is present at Asn282.

It belongs to the glycosyl hydrolase 56 family. Expressed by the venom gland.

The protein resides in the secreted. It carries out the reaction Random hydrolysis of (1-&gt;4)-linkages between N-acetyl-beta-D-glucosamine and D-glucuronate residues in hyaluronate.. Its function is as follows. Hydrolyzes high molecular weight hyaluronic acid to produce small oligosaccharides. This Polybia paulista (Neotropical social wasp) protein is Hyaluronidase.